A 1196-amino-acid chain; its full sequence is DNA-directed RNA polymerase subunit beta (1196 aa).

Belongs to the RNA polymerase beta chain family. As to quaternary structure, the RNAP catalytic core consists of 2 alpha, 1 beta, 1 beta' and 1 omega subunit. When a sigma factor is associated with the core the holoenzyme is formed, which can initiate transcription.

It catalyses the reaction RNA(n) + a ribonucleoside 5'-triphosphate = RNA(n+1) + diphosphate. Its function is as follows. DNA-dependent RNA polymerase catalyzes the transcription of DNA into RNA using the four ribonucleoside triphosphates as substrates. This Lactococcus lactis subsp. lactis (strain IL1403) (Streptococcus lactis) protein is DNA-directed RNA polymerase subunit beta.